Reading from the N-terminus, the 78-residue chain is NAD(P)H-quinone oxidoreductase subunit O (78 aa).

The protein belongs to the complex I NdhO subunit family. In terms of assembly, NDH-1 can be composed of about 15 different subunits; different subcomplexes with different compositions have been identified which probably have different functions.

Its subcellular location is the cellular thylakoid membrane. It catalyses the reaction a plastoquinone + NADH + (n+1) H(+)(in) = a plastoquinol + NAD(+) + n H(+)(out). The enzyme catalyses a plastoquinone + NADPH + (n+1) H(+)(in) = a plastoquinol + NADP(+) + n H(+)(out). NDH-1 shuttles electrons from an unknown electron donor, via FMN and iron-sulfur (Fe-S) centers, to quinones in the respiratory and/or the photosynthetic chain. The immediate electron acceptor for the enzyme in this species is believed to be plastoquinone. Couples the redox reaction to proton translocation, and thus conserves the redox energy in a proton gradient. Cyanobacterial NDH-1 also plays a role in inorganic carbon-concentration. This Prochlorococcus marinus (strain MIT 9215) protein is NAD(P)H-quinone oxidoreductase subunit O.